The chain runs to 428 residues: Kynureninase (428 aa).

Residues Thr-104, Thr-105, 132-135 (FPSD), Asp-213, His-216, and Tyr-238 contribute to the pyridoxal 5'-phosphate site. Lys-239 bears the N6-(pyridoxal phosphate)lysine mark. The pyridoxal 5'-phosphate site is built by Trp-267 and Thr-295.

The protein belongs to the kynureninase family. In terms of assembly, homodimer. It depends on pyridoxal 5'-phosphate as a cofactor.

It catalyses the reaction L-kynurenine + H2O = anthranilate + L-alanine + H(+). The catalysed reaction is 3-hydroxy-L-kynurenine + H2O = 3-hydroxyanthranilate + L-alanine + H(+). It participates in amino-acid degradation; L-kynurenine degradation; L-alanine and anthranilate from L-kynurenine: step 1/1. Its pathway is cofactor biosynthesis; NAD(+) biosynthesis; quinolinate from L-kynurenine: step 2/3. Its function is as follows. Catalyzes the cleavage of L-kynurenine (L-Kyn) and L-3-hydroxykynurenine (L-3OHKyn) into anthranilic acid (AA) and 3-hydroxyanthranilic acid (3-OHAA), respectively. This chain is Kynureninase, found in Bacillus mycoides (strain KBAB4) (Bacillus weihenstephanensis).